The primary structure comprises 447 residues: Serine/threonine-protein phosphatase 2A 55 kDa regulatory subunit B gamma isoform (447 aa).

WD repeat units lie at residues 22-61, 87-128, 171-209, 220-260, 279-317, 334-375, and 410-446; these read TEAD…KNAP, EIEE…KRPE, GHTY…RSFN, DLTE…LCDK, EIIS…RPIE, ESDC…DVTL, and DFTK…NSDM.

The protein belongs to the phosphatase 2A regulatory subunit B family. In terms of assembly, PP2A consists of a common heterodimeric core enzyme, composed of a 36 kDa catalytic subunit (subunit C) and a 65 kDa constant regulatory subunit (PR65 or subunit A), that associates with a variety of regulatory subunits. Proteins that associate with the core dimer include three families of regulatory subunits B (the R2/B/PR55/B55, R3/B''/PR72/PR130/PR59 and R5/B'/B56 families), the 48 kDa variable regulatory subunit, viral proteins, and cell signaling molecules. Interacts with IER5. Highly expressed in brain.

Functionally, the B regulatory subunit might modulate substrate selectivity and catalytic activity, and might also direct the localization of the catalytic enzyme to a particular subcellular compartment. The sequence is that of Serine/threonine-protein phosphatase 2A 55 kDa regulatory subunit B gamma isoform (Ppp2r2c) from Rattus norvegicus (Rat).